A 144-amino-acid chain; its full sequence is Sentan (144 aa).

Residues 1–31 are disordered; it reads MCGCRASVPSTKHYSVNPAPTTRSPPAAAGM. Residues 18–29 are compositionally biased toward low complexity; the sequence is PAPTTRSPPAAA.

Belongs to the S-100 family.

The protein resides in the cell projection. Its subcellular location is the cilium. Its function is as follows. May be a component of the linker structure that bridges the ciliary membrane and peripheral singlet microtubules. In Gallus gallus (Chicken), this protein is Sentan.